A 141-amino-acid chain; its full sequence is uncharacterized protein (141 aa).

This sequence belongs to the PhzA/PhzB family.

This is an uncharacterized protein from Pseudomonas aeruginosa (strain ATCC 15692 / DSM 22644 / CIP 104116 / JCM 14847 / LMG 12228 / 1C / PRS 101 / PAO1).